Reading from the N-terminus, the 1220-residue chain is DNA-directed RNA polymerase subunit beta (1220 aa).

Belongs to the RNA polymerase beta chain family. In terms of assembly, the RNAP catalytic core consists of 2 alpha, 1 beta, 1 beta' and 1 omega subunit. When a sigma factor is associated with the core the holoenzyme is formed, which can initiate transcription.

It catalyses the reaction RNA(n) + a ribonucleoside 5'-triphosphate = RNA(n+1) + diphosphate. Functionally, DNA-dependent RNA polymerase catalyzes the transcription of DNA into RNA using the four ribonucleoside triphosphates as substrates. The polypeptide is DNA-directed RNA polymerase subunit beta (Mesomycoplasma hyopneumoniae (strain J / ATCC 25934 / NCTC 10110) (Mycoplasma hyopneumoniae)).